The following is a 346-amino-acid chain: tRNA N6-adenosine threonylcarbamoyltransferase (346 aa).

Positions 111 and 115 each coordinate Fe cation. Substrate contacts are provided by residues 134-138 (LVSGG), aspartate 167, glycine 180, and asparagine 279. Position 307 (aspartate 307) interacts with Fe cation.

This sequence belongs to the KAE1 / TsaD family. It depends on Fe(2+) as a cofactor.

It localises to the cytoplasm. It carries out the reaction L-threonylcarbamoyladenylate + adenosine(37) in tRNA = N(6)-L-threonylcarbamoyladenosine(37) in tRNA + AMP + H(+). Its function is as follows. Required for the formation of a threonylcarbamoyl group on adenosine at position 37 (t(6)A37) in tRNAs that read codons beginning with adenine. Is involved in the transfer of the threonylcarbamoyl moiety of threonylcarbamoyl-AMP (TC-AMP) to the N6 group of A37, together with TsaE and TsaB. TsaD likely plays a direct catalytic role in this reaction. The chain is tRNA N6-adenosine threonylcarbamoyltransferase from Burkholderia pseudomallei (strain K96243).